A 134-amino-acid chain; its full sequence is Replication enhancer protein (134 aa).

This sequence belongs to the geminiviridae replication enhancer protein family. In terms of assembly, homooligomer. Interacts with the replication-associated protein (REP). Interacts with host proliferating cell nuclear antigen (PCNA). Interacts with host retinoblastoma-related protein 1 (RBR1), and may thereby deregulate the host cell cycle. Oligomerization and interaction with PCNA are necessary for optimal replication enhancement.

In terms of biological role, increases viral DNA accumulation. Enhances infectivity and symptom expression. In Cynanchum acutum (Little mallow), this protein is Replication enhancer protein.